A 252-amino-acid chain; its full sequence is Eukaryotic translation initiation factor 3 subunit J (252 aa).

Disordered stretches follow at residues 24–107 (VPAG…TPEE) and 209–232 (KQSKAKKKKKGVVPGGGLKATMKD). Over residues 36 to 56 (EDEEDDVKDNWDDEEEEEEVK) the composition is skewed to acidic residues. Over residues 57 to 107 (EAEVKQEPKVSEKKKIAEKIKEKEKQQKKKQEELKKRLEAPEEHKELTPEE) the composition is skewed to basic and acidic residues. A coiled-coil region spans residues 65–130 (KVSEKKKIAE…ESDLELAKET (66 aa)).

This sequence belongs to the eIF-3 subunit J family. Component of the eukaryotic translation initiation factor 3 (eIF-3) complex, which is composed of 13 subunits: EIF3A, EIF3B, EIF3C, EIF3D, EIF3E, EIF3F, EIF3G, EIF3H, EIF3I, EIF3J, EIF3K, EIF3L and EIF3M.

It localises to the cytoplasm. Functionally, component of the eukaryotic translation initiation factor 3 (eIF-3) complex, which is involved in protein synthesis of a specialized repertoire of mRNAs and, together with other initiation factors, stimulates binding of mRNA and methionyl-tRNAi to the 40S ribosome. The eIF-3 complex specifically targets and initiates translation of a subset of mRNAs involved in cell proliferation. The chain is Eukaryotic translation initiation factor 3 subunit J from Gallus gallus (Chicken).